The following is a 560-amino-acid chain: Dihydroxy-acid dehydratase (560 aa).

C52 serves as a coordination point for [2Fe-2S] cluster. D84 is a Mg(2+) binding site. Residue C125 participates in [2Fe-2S] cluster binding. The Mg(2+) site is built by D126 and K127. K127 is subject to N6-carboxylysine. C197 is a [2Fe-2S] cluster binding site. Mg(2+) is bound at residue E448. Catalysis depends on S474, which acts as the Proton acceptor.

It belongs to the IlvD/Edd family. As to quaternary structure, homodimer. Requires [2Fe-2S] cluster as cofactor. The cofactor is Mg(2+).

The catalysed reaction is (2R)-2,3-dihydroxy-3-methylbutanoate = 3-methyl-2-oxobutanoate + H2O. The enzyme catalyses (2R,3R)-2,3-dihydroxy-3-methylpentanoate = (S)-3-methyl-2-oxopentanoate + H2O. Its pathway is amino-acid biosynthesis; L-isoleucine biosynthesis; L-isoleucine from 2-oxobutanoate: step 3/4. It functions in the pathway amino-acid biosynthesis; L-valine biosynthesis; L-valine from pyruvate: step 3/4. Its function is as follows. Functions in the biosynthesis of branched-chain amino acids. Catalyzes the dehydration of (2R,3R)-2,3-dihydroxy-3-methylpentanoate (2,3-dihydroxy-3-methylvalerate) into 2-oxo-3-methylpentanoate (2-oxo-3-methylvalerate) and of (2R)-2,3-dihydroxy-3-methylbutanoate (2,3-dihydroxyisovalerate) into 2-oxo-3-methylbutanoate (2-oxoisovalerate), the penultimate precursor to L-isoleucine and L-valine, respectively. This chain is Dihydroxy-acid dehydratase, found in Francisella tularensis subsp. novicida (strain U112).